The sequence spans 446 residues: Tubulin beta-5 chain (446 aa).

An MREI motif motif is present at residues Met-1 to Ile-4. GTP is bound by residues Gln-11, Glu-69, Ser-138, Gly-142, Thr-143, Gly-144, Asn-204, and Asn-226. Glu-69 provides a ligand contact to Mg(2+). 5-glutamyl polyglutamate is present on Glu-438.

The protein belongs to the tubulin family. In terms of assembly, dimer of alpha and beta chains. A typical microtubule is a hollow water-filled tube with an outer diameter of 25 nm and an inner diameter of 15 nM. Alpha-beta heterodimers associate head-to-tail to form protofilaments running lengthwise along the microtubule wall with the beta-tubulin subunit facing the microtubule plus end conferring a structural polarity. Microtubules usually have 13 protofilaments but different protofilament numbers can be found in some organisms and specialized cells. It depends on Mg(2+) as a cofactor. Some glutamate residues at the C-terminus are polyglycylated, resulting in polyglycine chains on the gamma-carboxyl group. Glycylation is mainly limited to tubulin incorporated into axonemes (cilia and flagella) whereas glutamylation is prevalent in neuronal cells, centrioles, axonemes, and the mitotic spindle. Both modifications can coexist on the same protein on adjacent residues, and lowering polyglycylation levels increases polyglutamylation, and reciprocally. The precise function of polyglycylation is still unclear. In terms of processing, some glutamate residues at the C-terminus are polyglutamylated, resulting in polyglutamate chains on the gamma-carboxyl group. Polyglutamylation plays a key role in microtubule severing by spastin (SPAST). SPAST preferentially recognizes and acts on microtubules decorated with short polyglutamate tails: severing activity by SPAST increases as the number of glutamates per tubulin rises from one to eight, but decreases beyond this glutamylation threshold.

Its subcellular location is the cytoplasm. The protein localises to the cytoskeleton. Tubulin is the major constituent of microtubules, a cylinder consisting of laterally associated linear protofilaments composed of alpha- and beta-tubulin heterodimers. Microtubules grow by the addition of GTP-tubulin dimers to the microtubule end, where a stabilizing cap forms. Below the cap, tubulin dimers are in GDP-bound state, owing to GTPase activity of alpha-tubulin. In Gallus gallus (Chicken), this protein is Tubulin beta-5 chain.